We begin with the raw amino-acid sequence, 165 residues long: Protein SprT (165 aa).

A SprT-like domain is found at 20 to 163 (EKLAQANLKL…RCVHCGEQLV (144 aa)). Histidine 78 serves as a coordination point for Zn(2+). Glutamate 79 is an active-site residue. A Zn(2+)-binding site is contributed by histidine 82.

The protein belongs to the SprT family. Requires Zn(2+) as cofactor.

It is found in the cytoplasm. This chain is Protein SprT, found in Shigella boydii serotype 18 (strain CDC 3083-94 / BS512).